The sequence spans 496 residues: Transcription factor CP2 (496 aa).

A Grh/CP2 DB domain is found at 61-300 (ENKILPFQYV…SPGFNSSHSS (240 aa)). The DNA-binding stretch occupies residues 133 to 386 (EHQQLEGWRW…LFNALKGRMV (254 aa)). Disordered stretches follow at residues 238-268 (FKPK…YQPS) and 296-327 (SSHS…LLPT). Basic and acidic residues predominate over residues 241 to 265 (KGADRKQKTDREKMEKRTPHEKEKY).

This sequence belongs to the grh/CP2 family. CP2 subfamily. As to quaternary structure, component of the SSP (stage selector protein) complex, which appears to be a heteromer of TFCP2 and 2 copies of NFE4. As to expression, expressed in the epiblast at the pre-primitive streak stage. At the primitive streak stage, expressed in the extending primitive streak and in the prospective neural plate. At stages 7 and 8, expressed in the neural folds, somites and in the regressing primitive streak. At stage 12, ubiquitously expressed in the whole embryo.

The protein localises to the nucleus. Binds the B-response element 5'-CAAGTCCAGGCAAGT-3' of the ENS1/ERNI promoter. May be the major transcription activator thus being essential for its expression. This chain is Transcription factor CP2 (TFCP2), found in Gallus gallus (Chicken).